Consider the following 165-residue polypeptide: MPDLLTCDRHQIELSLAPIPLSAAAEFCHDDRYGAFASFVGWVRRVNVGRLVTGITYQSFQPLCRTVLTEICQEAEQVFGQELRIYVQHRLGETRVGDPTVLIGVGAIHRDEACEACRYVIEELKHRAPIWKLEHYEDGDSGWVPGNCLCQERRSRDRRGSTGPE.

Substrate is bound by residues Trp42–Arg44, His109–Arg110, Lys125, and Lys132–Glu134.

The protein belongs to the MoaE family. In terms of assembly, heterotetramer of 2 MoaD subunits and 2 MoaE subunits. Also stable as homodimer. The enzyme changes between these two forms during catalysis.

It carries out the reaction 2 [molybdopterin-synthase sulfur-carrier protein]-C-terminal-Gly-aminoethanethioate + cyclic pyranopterin phosphate + H2O = molybdopterin + 2 [molybdopterin-synthase sulfur-carrier protein]-C-terminal Gly-Gly + 2 H(+). The protein operates within cofactor biosynthesis; molybdopterin biosynthesis. Its function is as follows. Converts molybdopterin precursor Z into molybdopterin. This requires the incorporation of two sulfur atoms into precursor Z to generate a dithiolene group. The sulfur is provided by MoaD. This is Molybdopterin synthase catalytic subunit (moaE) from Synechococcus elongatus (strain ATCC 33912 / PCC 7942 / FACHB-805) (Anacystis nidulans R2).